The primary structure comprises 141 residues: HTH-type transcriptional repressor NsrR (141 aa).

An HTH rrf2-type domain is found at 2-129; that stretch reads QLTSFTDYGL…DQYTLADMVK (128 aa). A DNA-binding region (H-T-H motif) is located at residues 28-51; the sequence is ISEVTEVYGVSRNHMVKIINQLSR. [2Fe-2S] cluster is bound by residues C91, C96, and C102.

Requires [2Fe-2S] cluster as cofactor.

Nitric oxide-sensitive repressor of genes involved in protecting the cell against nitrosative stress. May require iron for activity. The chain is HTH-type transcriptional repressor NsrR from Pectobacterium atrosepticum (strain SCRI 1043 / ATCC BAA-672) (Erwinia carotovora subsp. atroseptica).